Here is a 342-residue protein sequence, read N- to C-terminus: uncharacterized protein (342 aa).

It belongs to the cycloisomerase 2 family.

This is an uncharacterized protein from Staphylococcus aureus (strain bovine RF122 / ET3-1).